We begin with the raw amino-acid sequence, 250 residues long: MTILFLTMVISYFGCMKAAPMKEANLRAQGSLAYPGVRTHGTLESMNGPKVGSRGLTSSSSLADTFEHVIEELLDEDQKVRPSEENNKDADMYTSRVMLSSQVPLEPPLLFLLEEYKNYLDAANMSMRVRRHSDPARRGELSVCDSISEWVTAADKKTAVDMSGGTVTVLEKVPVSKGQLKQYFYETKCNPMGYTKEGCRGIDKRHWNSQCRTTQSYVRALTMDSKKRIGWRFIRIDTSCVCTLTIKRGR.

The N-terminal stretch at 1–18 is a signal peptide; it reads MTILFLTMVISYFGCMKA. Residues 19 to 131 constitute a propeptide that is removed on maturation; the sequence is APMKEANLRA…AANMSMRVRR (113 aa). 3 disulfides stabilise this stretch: Cys144–Cys211, Cys189–Cys240, and Cys199–Cys242.

This sequence belongs to the NGF-beta family. In terms of assembly, monomers and homodimers. Binds to NTRK2/TRKB. Can form heterodimers with other neurotrophin family members, such as NTF3 and NTF4 (in vitro), but the physiological relevance of this is not clear. BDNF precursor form: interacts with the heterodimer formed by NGFR and SORCS2. Mature BDNF has much lower affinity for the heterodimer formed by NGFR and SORCS2. Post-translationally, N-glycosylated and glycosulfated, contrary to mature BDNF. In terms of processing, mature BDNF is produced by proteolytic removal of the propeptide, catalyzed by a FURIN family member. In addition, the precursor form is proteolytically cleaved within the propeptide, but this is not an obligatory intermediate for the production of mature BDNF. Can be converted into mature BDNF by plasmin (PLG).

The protein resides in the secreted. Important signaling molecule that activates signaling cascades downstream of NTRK2. During development, promotes the survival and differentiation of selected neuronal populations of the peripheral and central nervous systems. Participates in axonal growth, pathfinding and in the modulation of dendritic growth and morphology. Major regulator of synaptic transmission and plasticity at adult synapses in many regions of the CNS. The versatility of BDNF is emphasized by its contribution to a range of adaptive neuronal responses including long-term potentiation (LTP), long-term depression (LTD), certain forms of short-term synaptic plasticity, as well as homeostatic regulation of intrinsic neuronal excitability. Its function is as follows. Important signaling molecule that activates signaling cascades downstream of NTRK2. Activates signaling cascades via the heterodimeric receptor formed by NGFR and SORCS2. Signaling via NGFR and SORCS2 plays a role in synaptic plasticity and long-term depression (LTD). Binding to NGFR and SORCS2 promotes neuronal apoptosis. Promotes neuronal growth cone collapse. In Bos taurus (Bovine), this protein is Neurotrophic factor BDNF precursor form (BDNF).